Here is a 915-residue protein sequence, read N- to C-terminus: Transferrin-binding protein A (915 aa).

The first 24 residues, Met1–Ala24, serve as a signal peptide directing secretion. Over Glu25–Gln187 the chain is Periplasmic. The TonB box signature appears at Asp38–Lys45. The TBDR plug domain maps to Arg51 to Lys176. Positions Ser121–Ala139 are plug loop, interacts with transferrin. A TBDR beta-barrel domain is found at Gln187–Phe915. A beta stranded membrane pass occupies residues Trp188–Ser197. The Extracellular portion of the chain corresponds to Gly198–Leu203. Residues Thr204–Ile213 form a beta stranded membrane-spanning segment. At Gly214–Gly215 the chain is on the periplasmic side. The chain crosses the membrane as a beta stranded span at residues Ala216 to Arg225. Residues Arg226–Ser309 are Extracellular-facing. Residues Arg310–Arg319 form a beta stranded membrane-spanning segment. Topologically, residues Phe320–Arg324 are periplasmic. A beta stranded membrane pass occupies residues His325–Thr334. The Extracellular portion of the chain corresponds to Gln335–Ser406. Residues Lys351–Ala361 form an L3 helix finger, interacts with transferrin region. The chain crosses the membrane as a beta stranded span at residues Arg407–Thr415. Topologically, residues Asn416–Ala423 are periplasmic. A beta stranded membrane pass occupies residues Asp424–Gln433. Over Gly434–Arg478 the chain is Extracellular. The chain crosses the membrane as a beta stranded span at residues Leu479–Phe488. The Periplasmic segment spans residues Asp489–Arg494. A beta stranded transmembrane segment spans residues His495–Asp504. Residues Arg505–Tyr583 lie on the Extracellular side of the membrane. Residues Ala523–Ser542 are disordered. A beta stranded membrane pass occupies residues Ala584–Leu592. The Periplasmic segment spans residues Gly593–Arg594. The chain crosses the membrane as a beta stranded span at residues Trp595–Arg603. The Extracellular segment spans residues Tyr604–Thr623. A beta stranded transmembrane segment spans residues Leu624 to Lys633. The Periplasmic portion of the chain corresponds to Pro634–Trp637. A beta stranded transmembrane segment spans residues Leu638–Gly647. The Extracellular segment spans residues Phe648–Ser675. A beta stranded membrane pass occupies residues Phe676–Lys685. The Periplasmic portion of the chain corresponds to Gly686–Gly689. Residues Asn690–Ala699 traverse the membrane as a beta stranded segment. Topologically, residues Tyr700 to Ile733 are extracellular. The chain crosses the membrane as a beta stranded span at residues Thr734–Asp743. At Trp744–Trp755 the chain is on the periplasmic side. Residues Tyr756–Arg765 form a beta stranded membrane-spanning segment. Residues Val766–Arg790 lie on the Extracellular side of the membrane. The chain crosses the membrane as a beta stranded span at residues Tyr791–Gln799. Over Pro800–Gly802 the chain is Periplasmic. Residues Lys803 to Thr811 form a beta stranded membrane-spanning segment. Topologically, residues Tyr812–Trp845 are extracellular. A beta stranded membrane pass occupies residues Tyr846–Thr855. Residues Val856–Phe860 lie on the Periplasmic side of the membrane. A beta stranded membrane pass occupies residues Thr861–Leu870. At Asn871–Arg905 the chain is on the extracellular side. The TonB C-terminal box motif lies at Asn898 to Phe915. Residues Asn906–Phe915 form a beta stranded membrane-spanning segment.

The protein belongs to the TonB-dependent receptor family. As to quaternary structure, binds both human apo- and holo-transferrin (TF), via the TF C-terminus. Forms a large complex with TF and TbpB.

It is found in the cell outer membrane. In terms of biological role, neisseria acquires iron by extracting it from serum transferrin (TF) in its human host. Acts as a TF receptor and is required for TF utilization. Binds both apo- and holo-TF, via the TF C-terminus. This is Transferrin-binding protein A from Neisseria meningitidis serogroup B (strain ATCC BAA-335 / MC58).